We begin with the raw amino-acid sequence, 151 residues long: Small ribosomal subunit protein uS15 (151 aa).

The protein belongs to the universal ribosomal protein uS15 family. Component of the small ribosomal subunit.

Its subcellular location is the cytoplasm. In terms of biological role, component of the small ribosomal subunit. The ribosome is a large ribonucleoprotein complex responsible for the synthesis of proteins in the cell. The chain is Small ribosomal subunit protein uS15 (rps13) from Gillichthys mirabilis (Long-jawed mudsucker).